The sequence spans 376 residues: Nuclear egress protein 1 (376 aa).

Ser-19 carries the post-translational modification Phosphoserine. The interval 22 to 57 (RKRRQRELASKVASTVNGATSANNHGEPPSPADARP) is disordered. The span at 33–45 (VASTVNGATSANN) shows a compositional bias: polar residues. A CCCH-type zinc finger spans residues 106-211 (CLDISPYGNE…HVIFENPDVH (106 aa)). The segment at 316 to 376 (VVSTNGCGPS…PLFLNSIRAP (61 aa)) is disordered. Residues 317–332 (VSTNGCGPSSSSQSTP) are compositionally biased toward polar residues.

Belongs to the herpesviridae NEC1 protein family. In terms of assembly, forms a heterohexameric complex with NEC2. Interacts with capsid vertex specific component 2/CVC2; this interaction directs the capsid to the host inner nuclear membrane to initiate budding. In terms of processing, phosphorylated at serine residues in the N-terminus. This phosphorylation regulates the localization within the inner nuclear membrane. Phosphorylation by viral kinase UL97 at Ser-19 plays an important role for correct viral nuclear egress complex (NEC) localization.

The protein resides in the host nucleus inner membrane. Functionally, plays an essential role in virion nuclear egress, the first step of virion release from infected cell. Within the host nucleus, NEC1 interacts with the newly formed capsid through the vertexes and directs it to the inner nuclear membrane by associating with NEC2. Induces the budding of the capsid at the inner nuclear membrane as well as its envelopment into the perinuclear space. There, the NEC1/NEC2 complex promotes the fusion of the enveloped capsid with the outer nuclear membrane and the subsequent release of the viral capsid into the cytoplasm where it will reach the secondary budding sites in the host Golgi or trans-Golgi network. This chain is Nuclear egress protein 1, found in Homo sapiens (Human).